A 273-amino-acid polypeptide reads, in one-letter code: 2-dehydro-3-deoxyphosphooctonate aldolase (273 aa).

This sequence belongs to the KdsA family.

It is found in the cytoplasm. It carries out the reaction D-arabinose 5-phosphate + phosphoenolpyruvate + H2O = 3-deoxy-alpha-D-manno-2-octulosonate-8-phosphate + phosphate. The protein operates within carbohydrate biosynthesis; 3-deoxy-D-manno-octulosonate biosynthesis; 3-deoxy-D-manno-octulosonate from D-ribulose 5-phosphate: step 2/3. It participates in bacterial outer membrane biogenesis; lipopolysaccharide biosynthesis. This chain is 2-dehydro-3-deoxyphosphooctonate aldolase, found in Nitratidesulfovibrio vulgaris (strain ATCC 29579 / DSM 644 / CCUG 34227 / NCIMB 8303 / VKM B-1760 / Hildenborough) (Desulfovibrio vulgaris).